A 260-amino-acid chain; its full sequence is Glutamate racemase (260 aa).

Residues Asp-14–Ser-15 and Tyr-46–Gly-47 each bind substrate. The Proton donor/acceptor role is filled by Cys-77. Position 78-79 (Asn-78–Thr-79) interacts with substrate. Residue Cys-188 is the Proton donor/acceptor of the active site. Thr-189–His-190 is a substrate binding site.

The protein belongs to the aspartate/glutamate racemases family.

It catalyses the reaction L-glutamate = D-glutamate. It functions in the pathway cell wall biogenesis; peptidoglycan biosynthesis. Functionally, provides the (R)-glutamate required for cell wall biosynthesis. In Clostridium perfringens (strain 13 / Type A), this protein is Glutamate racemase.